Consider the following 217-residue polypeptide: Probable GTP-binding protein EngB (217 aa).

The region spanning 44 to 217 is the EngB-type G domain; sequence DRVEVCFAGR…TLRSIIAHLE (174 aa). Residues 52–59, 79–83, 97–100, 164–167, and 198–200 each bind GTP; these read GRSNVGKS, GRTQE, DLPG, TKAD, and TSS. Mg(2+) is bound by residues Ser-59 and Thr-81.

This sequence belongs to the TRAFAC class TrmE-Era-EngA-EngB-Septin-like GTPase superfamily. EngB GTPase family. Mg(2+) is required as a cofactor.

In terms of biological role, necessary for normal cell division and for the maintenance of normal septation. In Ruegeria pomeroyi (strain ATCC 700808 / DSM 15171 / DSS-3) (Silicibacter pomeroyi), this protein is Probable GTP-binding protein EngB.